The primary structure comprises 280 residues: Ribosomal RNA small subunit methyltransferase I (280 aa).

The protein belongs to the methyltransferase superfamily. RsmI family.

It is found in the cytoplasm. It carries out the reaction cytidine(1402) in 16S rRNA + S-adenosyl-L-methionine = 2'-O-methylcytidine(1402) in 16S rRNA + S-adenosyl-L-homocysteine + H(+). Functionally, catalyzes the 2'-O-methylation of the ribose of cytidine 1402 (C1402) in 16S rRNA. The sequence is that of Ribosomal RNA small subunit methyltransferase I from Rickettsia prowazekii (strain Madrid E).